A 199-amino-acid chain; its full sequence is Holliday junction branch migration complex subunit RuvA (199 aa).

The interval methionine 1–leucine 64 is domain I. The domain II stretch occupies residues aspartate 65–glutamate 143. A flexible linker region spans residues glutamine 144–leucine 148. The segment at leucine 148 to arginine 199 is domain III.

This sequence belongs to the RuvA family. As to quaternary structure, homotetramer. Forms an RuvA(8)-RuvB(12)-Holliday junction (HJ) complex. HJ DNA is sandwiched between 2 RuvA tetramers; dsDNA enters through RuvA and exits via RuvB. An RuvB hexamer assembles on each DNA strand where it exits the tetramer. Each RuvB hexamer is contacted by two RuvA subunits (via domain III) on 2 adjacent RuvB subunits; this complex drives branch migration. In the full resolvosome a probable DNA-RuvA(4)-RuvB(12)-RuvC(2) complex forms which resolves the HJ.

It is found in the cytoplasm. In terms of biological role, the RuvA-RuvB-RuvC complex processes Holliday junction (HJ) DNA during genetic recombination and DNA repair, while the RuvA-RuvB complex plays an important role in the rescue of blocked DNA replication forks via replication fork reversal (RFR). RuvA specifically binds to HJ cruciform DNA, conferring on it an open structure. The RuvB hexamer acts as an ATP-dependent pump, pulling dsDNA into and through the RuvAB complex. HJ branch migration allows RuvC to scan DNA until it finds its consensus sequence, where it cleaves and resolves the cruciform DNA. The sequence is that of Holliday junction branch migration complex subunit RuvA from Syntrophomonas wolfei subsp. wolfei (strain DSM 2245B / Goettingen).